A 1842-amino-acid chain; its full sequence is Vacuolar membrane-associated protein iml1 (1842 aa).

A compositionally biased stretch (basic residues) spans Met-1–Leu-12. 3 disordered regions span residues Met-1–Asp-49, Arg-728–Pro-817, and Ser-887–Asn-976. The segment covering Ser-16–Pro-31 has biased composition (polar residues). Residues Asn-36–Asp-49 show a composition bias toward basic and acidic residues. Residues Arg-728–Lys-738 show a composition bias toward basic residues. Basic and acidic residues predominate over residues Ala-750–Thr-767. The span at Pro-797 to Ala-814 shows a compositional bias: low complexity. Positions Ser-963 to Asn-976 are enriched in polar residues. One can recognise a DEP domain in the interval Gly-1338–Ser-1413. Disordered regions lie at residues Ser-1422 to Asn-1475 and Asn-1822 to Thr-1842.

Belongs to the IML1 family.

The protein localises to the vacuole membrane. This chain is Vacuolar membrane-associated protein iml1 (iml1), found in Neosartorya fischeri (strain ATCC 1020 / DSM 3700 / CBS 544.65 / FGSC A1164 / JCM 1740 / NRRL 181 / WB 181) (Aspergillus fischerianus).